Reading from the N-terminus, the 100-residue chain is Urease subunit gamma (100 aa).

This sequence belongs to the urease gamma subunit family. In terms of assembly, heterotrimer of UreA (gamma), UreB (beta) and UreC (alpha) subunits. Three heterotrimers associate to form the active enzyme.

It localises to the cytoplasm. The enzyme catalyses urea + 2 H2O + H(+) = hydrogencarbonate + 2 NH4(+). The protein operates within nitrogen metabolism; urea degradation; CO(2) and NH(3) from urea (urease route): step 1/1. This chain is Urease subunit gamma, found in Teredinibacter turnerae (strain ATCC 39867 / T7901).